Here is a 226-residue protein sequence, read N- to C-terminus: V-type proton ATPase subunit E 2 (226 aa).

Belongs to the V-ATPase E subunit family. In terms of assembly, V-ATPase is a heteromultimeric enzyme made up of two complexes: the ATP-hydrolytic V1 complex and the proton translocation V0 complex. The V1 complex consists of three catalytic AB heterodimers that form a heterohexamer, three peripheral stalks each consisting of EG heterodimers, one central rotor including subunits D and F, and the regulatory subunits C and H. The proton translocation complex V0 consists of the proton transport subunit a, a ring of proteolipid subunits c9c'', rotary subunit d, subunits e and f, and the accessory subunits ATP6AP1/Ac45 and ATP6AP2/PRR. As to expression, testis specific.

Its function is as follows. Subunit of the V1 complex of vacuolar(H+)-ATPase (V-ATPase), a multisubunit enzyme composed of a peripheral complex (V1) that hydrolyzes ATP and a membrane integral complex (V0) that translocates protons. V-ATPase is responsible for acidifying and maintaining the pH of intracellular compartments and in some cell types, is targeted to the plasma membrane, where it is responsible for acidifying the extracellular environment. The polypeptide is V-type proton ATPase subunit E 2 (Atp6v1e2) (Mus musculus (Mouse)).